The sequence spans 419 residues: Multifunctional CCA protein (419 aa).

Positions 8 and 11 each coordinate ATP. 2 residues coordinate CTP: G8 and R11. Mg(2+) contacts are provided by D21 and D23. The ATP site is built by R91, R137, and R140. 3 residues coordinate CTP: R91, R137, and R140. Residues 228-334 (SFLHTMLVLQ…IKLFNKLDVW (107 aa)) enclose the HD domain.

This sequence belongs to the tRNA nucleotidyltransferase/poly(A) polymerase family. Bacterial CCA-adding enzyme type 1 subfamily. In terms of assembly, monomer. Can also form homodimers and oligomers. Mg(2+) is required as a cofactor. The cofactor is Ni(2+).

The enzyme catalyses a tRNA precursor + 2 CTP + ATP = a tRNA with a 3' CCA end + 3 diphosphate. It catalyses the reaction a tRNA with a 3' CCA end + 2 CTP + ATP = a tRNA with a 3' CCACCA end + 3 diphosphate. Catalyzes the addition and repair of the essential 3'-terminal CCA sequence in tRNAs without using a nucleic acid template. Adds these three nucleotides in the order of C, C, and A to the tRNA nucleotide-73, using CTP and ATP as substrates and producing inorganic pyrophosphate. tRNA 3'-terminal CCA addition is required both for tRNA processing and repair. Also involved in tRNA surveillance by mediating tandem CCA addition to generate a CCACCA at the 3' terminus of unstable tRNAs. While stable tRNAs receive only 3'-terminal CCA, unstable tRNAs are marked with CCACCA and rapidly degraded. This chain is Multifunctional CCA protein, found in Mannheimia succiniciproducens (strain KCTC 0769BP / MBEL55E).